A 145-amino-acid polypeptide reads, in one-letter code: uncharacterized protein (145 aa).

This is an uncharacterized protein from Escherichia coli (strain K12).